A 119-amino-acid polypeptide reads, in one-letter code: Protein TusC (119 aa).

Belongs to the DsrF/TusC family. As to quaternary structure, heterohexamer, formed by a dimer of trimers. The hexameric TusBCD complex contains 2 copies each of TusB, TusC and TusD. The TusBCD complex interacts with TusE.

It is found in the cytoplasm. Part of a sulfur-relay system required for 2-thiolation of 5-methylaminomethyl-2-thiouridine (mnm(5)s(2)U) at tRNA wobble positions. The polypeptide is Protein TusC (Buchnera aphidicola subsp. Acyrthosiphon pisum (strain APS) (Acyrthosiphon pisum symbiotic bacterium)).